A 95-amino-acid chain; its full sequence is Large ribosomal subunit protein uL23 (95 aa).

It belongs to the universal ribosomal protein uL23 family. As to quaternary structure, part of the 50S ribosomal subunit. Contacts protein L29, and trigger factor when it is bound to the ribosome.

One of the early assembly proteins it binds 23S rRNA. One of the proteins that surrounds the polypeptide exit tunnel on the outside of the ribosome. Forms the main docking site for trigger factor binding to the ribosome. The chain is Large ribosomal subunit protein uL23 from Shouchella clausii (strain KSM-K16) (Alkalihalobacillus clausii).